A 269-amino-acid polypeptide reads, in one-letter code: Formamidopyrimidine-DNA glycosylase (269 aa).

Residue Pro-2 is the Schiff-base intermediate with DNA of the active site. The Proton donor role is filled by Glu-3. Lys-57 acts as the Proton donor; for beta-elimination activity in catalysis. DNA-binding residues include His-90, Arg-109, and Lys-150. The FPG-type zinc-finger motif lies at 235–269 (QVYGREGEPCRVCGTPILAGKHAQRRTYWCRRCQK). The Proton donor; for delta-elimination activity role is filled by Arg-259.

This sequence belongs to the FPG family. In terms of assembly, monomer. The cofactor is Zn(2+).

It carries out the reaction Hydrolysis of DNA containing ring-opened 7-methylguanine residues, releasing 2,6-diamino-4-hydroxy-5-(N-methyl)formamidopyrimidine.. The catalysed reaction is 2'-deoxyribonucleotide-(2'-deoxyribose 5'-phosphate)-2'-deoxyribonucleotide-DNA = a 3'-end 2'-deoxyribonucleotide-(2,3-dehydro-2,3-deoxyribose 5'-phosphate)-DNA + a 5'-end 5'-phospho-2'-deoxyribonucleoside-DNA + H(+). Its function is as follows. Involved in base excision repair of DNA damaged by oxidation or by mutagenic agents. Acts as a DNA glycosylase that recognizes and removes damaged bases. Has a preference for oxidized purines, such as 7,8-dihydro-8-oxoguanine (8-oxoG). Has AP (apurinic/apyrimidinic) lyase activity and introduces nicks in the DNA strand. Cleaves the DNA backbone by beta-delta elimination to generate a single-strand break at the site of the removed base with both 3'- and 5'-phosphates. This Cronobacter sakazakii (strain ATCC BAA-894) (Enterobacter sakazakii) protein is Formamidopyrimidine-DNA glycosylase.